The following is a 741-amino-acid chain: Penicillin-binding protein 1B (741 aa).

Topologically, residues Met-1–Phe-12 are cytoplasmic. The chain crosses the membrane as a helical; Signal-anchor for type II membrane protein span at residues Leu-13–Phe-33. The Extracellular portion of the chain corresponds to Lys-34–Thr-741. The segment at Leu-139 to Val-311 is transglycosylase. Catalysis depends on Glu-177, which acts as the Proton donor; for transglycosylase activity. The tract at residues Glu-395–Asn-687 is transpeptidase. Residue Ser-454 is the Acyl-ester intermediate; for transpeptidase activity of the active site.

This sequence in the N-terminal section; belongs to the glycosyltransferase 51 family. It in the C-terminal section; belongs to the transpeptidase family.

It is found in the cell membrane. The enzyme catalyses [GlcNAc-(1-&gt;4)-Mur2Ac(oyl-L-Ala-gamma-D-Glu-L-Lys-D-Ala-D-Ala)](n)-di-trans,octa-cis-undecaprenyl diphosphate + beta-D-GlcNAc-(1-&gt;4)-Mur2Ac(oyl-L-Ala-gamma-D-Glu-L-Lys-D-Ala-D-Ala)-di-trans,octa-cis-undecaprenyl diphosphate = [GlcNAc-(1-&gt;4)-Mur2Ac(oyl-L-Ala-gamma-D-Glu-L-Lys-D-Ala-D-Ala)](n+1)-di-trans,octa-cis-undecaprenyl diphosphate + di-trans,octa-cis-undecaprenyl diphosphate + H(+). The catalysed reaction is Preferential cleavage: (Ac)2-L-Lys-D-Ala-|-D-Ala. Also transpeptidation of peptidyl-alanyl moieties that are N-acyl substituents of D-alanine.. The protein operates within cell wall biogenesis; peptidoglycan biosynthesis. Cell wall formation. Synthesis of cross-linked peptidoglycan from the lipid intermediates. The enzyme has a penicillin-insensitive transglycosylase N-terminal domain (formation of linear glycan strands) and a penicillin-sensitive transpeptidase C-terminal domain (cross-linking of the peptide subunits). The chain is Penicillin-binding protein 1B (mrcB) from Buchnera aphidicola subsp. Baizongia pistaciae (strain Bp).